We begin with the raw amino-acid sequence, 334 residues long: N-acetyl-S-alkylcysteine monooxygenase (334 aa).

It to bacterial alkanal monooxygenase alpha and beta chains.

The enzyme catalyses N-acetyl-S-benzyl-L-cysteine + FMNH2 + O2 = (R)-N-acetyl-S-benzyl-L-cysteine sulfoxide + FMN + H2O + H(+). It carries out the reaction N-acetyl-S-methyl-L-cysteine + FMNH2 + O2 = (R)-N-acetyl-S-methyl-L-cysteine sulfoxide + FMN + H2O + H(+). The protein operates within amino-acid metabolism. Involved in a cysteine salvage pathway from S-alkylcysteine. Catalyzes the oxidation of N-acetyl-S-benzyl-L-cysteine and N-acetyl-S-methyl-L-cysteine to (R)-N-acetyl-S-benzyl-L-cysteine sulfoxide and (R)-N-acetyl-S-methyl-L-cysteine sulfoxide, respectively. This pathway is likely important in the catabolism of alkylated cysteine generated by proteolysis of alkylated glutathione formed in the detoxification of a wide range of electrophiles. The protein is N-acetyl-S-alkylcysteine monooxygenase of Bacillus subtilis (strain 168).